The primary structure comprises 1103 residues: Ubiquitin carboxyl-terminal hydrolase 7 (1103 aa).

Residues 1–11 are compositionally biased toward low complexity; the sequence is MNHQQQQQQQQ. 2 disordered regions span residues 1–41 and 46–65; these read MNHQ…TQNP and NVTL…DDTS. Residues 1 to 209 are interaction with TSPYL5; it reads MNHQQQQQQQ…APHGVAWDSK (209 aa). Serine 19 is modified (phosphoserine). Acidic residues predominate over residues 20 to 32; that stretch reads EPEDMEMEAGDTD. Residues serine 50 and serine 54 each carry the phosphoserine modification. The segment at 54-209 is interaction with p53/TP53 and MDM2; sequence SNAEEDMEDD…APHGVAWDSK (156 aa). An MATH domain is found at 69 to 196; the sequence is EATFQFTVER…DDKVTFEVFV (128 aa). The interval 71 to 206 is necessary for nuclear localization; that stretch reads TFQFTVERFS…QADAPHGVAW (136 aa). The USP domain maps to 215–522; that stretch reads VGLKNQGATC…NAYMLVYIRE (308 aa). The active-site Nucleophile is cysteine 224. Histidine 465 functions as the Proton acceptor in the catalytic mechanism. Lysine 870 bears the N6-acetyllysine; alternate mark. Lysine 870 participates in a covalent cross-link: Glycyl lysine isopeptide (Lys-Gly) (interchain with G-Cter in SUMO2); alternate. A Glycyl lysine isopeptide (Lys-Gly) (interchain with G-Cter in ubiquitin); alternate cross-link involves residue lysine 870. A Glycyl lysine isopeptide (Lys-Gly) (interchain with G-Cter in SUMO2) cross-link involves residue lysine 883. Serine 964 is subject to Phosphoserine. N6-acetyllysine occurs at positions 1085 and 1097.

It belongs to the peptidase C19 family. In terms of assembly, monomer. Homodimer. Part of a complex with DAXX, MDM2, RASSF1 and USP7. Part of a complex with DAXX, MDM2 and USP7. Interacts with MDM2; the interaction is independent of p53/TP53. Interacts with DAXX; the interaction is direct and independent of MDM2 and p53/TP53. Component of a complex composed of KMT2E, OGT and USP7; the complex stabilizes KMT2E, preventing KMT2E ubiquitination and proteasomal-mediated degradation. Interacts (via MATH domain) with KMT2E. Interacts with OGT. Interacts with FOXO4; the interaction is enhanced in presence of hydrogen peroxide and occurs independently of p53/TP53. Interacts with p53/TP53; the interaction is enhanced in response to DNA damage; the interaction is impaired by TSPYL5. Interacts with PTEN; the interaction is direct. Interacts with ATXN1 and the strength of interaction is influenced by the length of the poly-Gln region in ATXN1. A weaker interaction seen with mutants having longer poly-Gln regions. Interacts with KIAA1530/UVSSA. Interacts with MEX3C and antagonizes its ability to degrade mRNA. Interacts with DNMT1 and UHRF1. Interacts with FOXP3. Interacts (via MATH domain) with RNF220. Associated component of the Polycomb group (PcG) multiprotein PRC1-like complex. Interacts with EPOP. Interacts with OTUD4 and USP9X; the interaction is direct. Interacts with CRY2. Interacts with REST. Interacts with ERCC6. Part of a complex consisting of USP7, MAGEL2 and TRIM27; directly interacts with MAGEL2; directly interacts with TRIM27. In terms of processing, polyneddylated. Post-translationally, not sumoylated. Polyubiquitinated. Ubiquitinated at Lys-870. In terms of tissue distribution, widely expressed. High expression is detected in brain, bone marrow, thymus and testis.

Its subcellular location is the nucleus. It is found in the cytoplasm. The protein localises to the PML body. It localises to the chromosome. The enzyme catalyses Thiol-dependent hydrolysis of ester, thioester, amide, peptide and isopeptide bonds formed by the C-terminal Gly of ubiquitin (a 76-residue protein attached to proteins as an intracellular targeting signal).. Its function is as follows. Hydrolase that deubiquitinates target proteins such as ARMC5, FOXO4, DEPTOR, KAT5, p53/TP53, MDM2, ERCC6, DNMT1, UHRF1, PTEN, KMT2E/MLL5 and DAXX. Together with DAXX, prevents MDM2 self-ubiquitination and enhances the E3 ligase activity of MDM2 towards p53/TP53, thereby promoting p53/TP53 ubiquitination and proteasomal degradation. Deubiquitinates p53/TP53, preventing degradation of p53/TP53, and enhances p53/TP53-dependent transcription regulation, cell growth repression and apoptosis. Deubiquitinates p53/TP53 and MDM2 and strongly stabilizes p53/TP53 even in the presence of excess MDM2, and also induces p53/TP53-dependent cell growth repression and apoptosis. Deubiquitination of FOXO4 in presence of hydrogen peroxide is not dependent on p53/TP53 and inhibits FOXO4-induced transcriptional activity. In association with DAXX, is involved in the deubiquitination and translocation of PTEN from the nucleus to the cytoplasm, both processes that are counteracted by PML. Deubiquitinates KMT2E preventing KMT2E proteasomal-mediated degradation. Involved in cell proliferation during early embryonic development. Involved in transcription-coupled nucleotide excision repair (TC-NER) in response to UV damage: recruited to DNA damage sites following interaction with KIAA1530/UVSSA and promotes deubiquitination of ERCC6, preventing UV-induced degradation of ERCC6. Involved in maintenance of DNA methylation via its interaction with UHRF1 and DNMT1: acts by mediating deubiquitination of UHRF1 and DNMT1, preventing their degradation and promoting DNA methylation by DNMT1. Deubiquitinates alkylation repair enzyme ALKBH3. OTUD4 recruits USP7 and USP9X to stabilize ALKBH3, thereby promoting the repair of alkylated DNA lesions. Acts as a chromatin regulator via its association with the Polycomb group (PcG) multiprotein PRC1-like complex; may act by deubiquitinating components of the PRC1-like complex. Able to mediate deubiquitination of histone H2B; it is however unsure whether this activity takes place in vivo. Exhibits a preference towards 'Lys-48'-linked ubiquitin chains. Increases regulatory T-cells (Treg) suppressive capacity by deubiquitinating and stabilizing the transcription factor FOXP3 which is crucial for Treg cell function. Plays a role in the maintenance of the circadian clock periodicity via deubiquitination and stabilization of the CRY1 and CRY2 proteins. Deubiquitinates REST, thereby stabilizing REST and promoting the maintenance of neural progenitor cells. Deubiquitinates SIRT7, inhibiting SIRT7 histone deacetylase activity and regulating gluconeogenesis. Involved in the regulation of WASH-dependent actin polymerization at the surface of endosomes and the regulation of endosomal protein recycling. It maintains optimal WASH complex activity and precise F-actin levels via deubiquitination of TRIM27 and WASHC1. Mediates the deubiquitination of phosphorylated DEPTOR, promoting its stability and leading to decreased mTORC1 signaling. In Mus musculus (Mouse), this protein is Ubiquitin carboxyl-terminal hydrolase 7 (Usp7).